The chain runs to 291 residues: Pantothenate synthetase (291 aa).

30–37 (MGYLHVGH) contacts ATP. The Proton donor role is filled by His-37. Gln-61 is a binding site for (R)-pantoate. Beta-alanine is bound at residue Gln-61. 147–150 (GEKD) contacts ATP. Gln-153 is a (R)-pantoate binding site. ATP contacts are provided by residues Val-176 and 184-187 (CSSR).

It belongs to the pantothenate synthetase family. As to quaternary structure, homodimer.

It is found in the cytoplasm. It carries out the reaction (R)-pantoate + beta-alanine + ATP = (R)-pantothenate + AMP + diphosphate + H(+). It functions in the pathway cofactor biosynthesis; (R)-pantothenate biosynthesis; (R)-pantothenate from (R)-pantoate and beta-alanine: step 1/1. Catalyzes the condensation of pantoate with beta-alanine in an ATP-dependent reaction via a pantoyl-adenylate intermediate. The protein is Pantothenate synthetase of Rhizobium meliloti (strain 1021) (Ensifer meliloti).